The chain runs to 93 residues: Large ribosomal subunit protein uL23cz/uL23cy (93 aa).

It belongs to the universal ribosomal protein uL23 family. As to quaternary structure, part of the 50S ribosomal subunit.

The protein localises to the plastid. It localises to the chloroplast. Binds to 23S rRNA. In Oenothera elata subsp. hookeri (Hooker's evening primrose), this protein is Large ribosomal subunit protein uL23cz/uL23cy (rpl23-A).